The primary structure comprises 67 residues: Large ribosomal subunit protein bL35 (67 aa).

The span at 1–16 (MPKMKTKSSAKKRFRV) shows a compositional bias: basic residues. The tract at residues 1–24 (MPKMKTKSSAKKRFRVRPGGTVKR) is disordered.

The protein belongs to the bacterial ribosomal protein bL35 family.

The chain is Large ribosomal subunit protein bL35 from Verminephrobacter eiseniae (strain EF01-2).